Reading from the N-terminus, the 432-residue chain is Gamma-glutamyl phosphate reductase (432 aa).

This sequence belongs to the gamma-glutamyl phosphate reductase family.

The protein resides in the cytoplasm. The catalysed reaction is L-glutamate 5-semialdehyde + phosphate + NADP(+) = L-glutamyl 5-phosphate + NADPH + H(+). It participates in amino-acid biosynthesis; L-proline biosynthesis; L-glutamate 5-semialdehyde from L-glutamate: step 2/2. Its function is as follows. Catalyzes the NADPH-dependent reduction of L-glutamate 5-phosphate into L-glutamate 5-semialdehyde and phosphate. The product spontaneously undergoes cyclization to form 1-pyrroline-5-carboxylate. This is Gamma-glutamyl phosphate reductase from Methylorubrum extorquens (strain PA1) (Methylobacterium extorquens).